The primary structure comprises 582 residues: MHILQVITGATLVSVPFVSAIPSSTSEFLPSTAEQNSAVLHSQGRSPPRLWTRLRDSIIETIWRVPSRQHNPSRIPSSLSIPRAPSSIRARYGDDVVLRFTIRSQNDVQALIEASNILFLDIWASTNEWVDIRLAKDVVSSLLGLLPSSLRTAHVPIIHDLAQAVYESYPQPVSSVPNPHHAFSPSVQQSSETQNIFFQDYQPLSVIIPWMRLLASMFSTHVRLVNLGTSYEGREIVGFRIGVRPANADLPTERRKTIVITGGSHAREWIGVSTVNYVAYSLITGYGKSRAITKLVEEFDWVLIPTMNPDGYVYTWETDRLWRKNRQENNLQFCPGVDLDRTWGYEWDGSDSRSNPCSEDFAGDGPFGGRESKVIAQWALNETNHHNVTFVGFLDLHSYSQQILYPYSYSCTNIPPTLENLEELAIGIAKAIRLTDHEHYDVSSACEGSVSSHKKRRGAALRSMQSAGGSALDWFYHDLHVRYAYQLKLRDKGGYGFLLPKKNIVPTGKEVYNAVLVFGQFLLGRGAQDIDWEGDFQFPAHSRPNVPEKEYRGPDEEYEISNQLEDDDNENDTLLGFRTQKV.

The N-terminal stretch at 1–20 is a signal peptide; that stretch reads MHILQVITGATLVSVPFVSA. A propeptide spanning residues 21 to 172 is cleaved from the precursor; the sequence is IPSSTSEFLP…QAVYESYPQP (152 aa). The 323-residue stretch at 200 to 522 folds into the Peptidase M14 domain; sequence DYQPLSVIIP…NAVLVFGQFL (323 aa). The Zn(2+) site is built by H265 and E268. Substrate contacts are provided by residues 265-268, R323, and 340-341; these read HARE and DR. C334 and C357 are joined by a disulfide. 2 N-linked (GlcNAc...) asparagine glycosylation sites follow: N381 and N387. H397 serves as a coordination point for Zn(2+). A substrate-binding site is contributed by 398-399; that stretch reads SY. Positions 561-571 are enriched in acidic residues; that stretch reads SNQLEDDDNEN. The tract at residues 561 to 582 is disordered; the sequence is SNQLEDDDNENDTLLGFRTQKV. N571 carries an N-linked (GlcNAc...) asparagine glycan.

The protein belongs to the peptidase M14 family. The cofactor is Zn(2+).

The protein localises to the vacuole. It localises to the secreted. In terms of biological role, inactive carboxypeptidase that may play a role in cell wall organization and biogenesis. This chain is Inactive metallocarboxypeptidase ECM14 (ECM14), found in Coccidioides posadasii (strain C735) (Valley fever fungus).